The primary structure comprises 145 residues: Deoxyuridine 5'-triphosphate nucleotidohydrolase (145 aa).

Substrate contacts are provided by residues 62–64 (RSG), Asn75, 79–81 (TVD), and Lys89.

This sequence belongs to the dUTPase family. Requires Mg(2+) as cofactor.

The enzyme catalyses dUTP + H2O = dUMP + diphosphate + H(+). The protein operates within pyrimidine metabolism; dUMP biosynthesis; dUMP from dCTP (dUTP route): step 2/2. In terms of biological role, this enzyme is involved in nucleotide metabolism: it produces dUMP, the immediate precursor of thymidine nucleotides and it decreases the intracellular concentration of dUTP so that uracil cannot be incorporated into DNA. In Helicobacter pylori (strain ATCC 700392 / 26695) (Campylobacter pylori), this protein is Deoxyuridine 5'-triphosphate nucleotidohydrolase.